Here is a 299-residue protein sequence, read N- to C-terminus: MSRSAGSFLILNGKSADNEILRGSVKLLRDQGHPIEVRVTWEKGDAARYVSEAADQGAQTVIAAGGDGTINEVAAALAGVTQEKRPALGLLPLGTANDFATSAAVPDDIELALKLAIEGRAVPIDIAHVNDKTWFINMATGGFGTRITTETPERLKAALGGVSYLIHGLMRMDALKADRCEIRGENFHWQGDALVIGIGNGRQAGGGQELCPEALINDGLLHLRIFTGEELLPALFTTLTQPEESPNIIDGASPWFEITAPHEITFNLDGEPLSGQHFRIVVEPGALQCRLPPDCPLLK.

The 132-residue stretch at 2–133 (SRSAGSFLIL…IDIAHVNDKT (132 aa)) folds into the DAGKc domain. ATP-binding positions include threonine 40, 66–72 (GDGTINE), and threonine 95. Positions 215, 218, and 220 each coordinate Mg(2+). Glutamate 271 acts as the Proton acceptor in catalysis.

Belongs to the diacylglycerol/lipid kinase family. YegS lipid kinase subfamily. Mg(2+) serves as cofactor. The cofactor is Ca(2+).

It localises to the cytoplasm. Functionally, probably phosphorylates lipids; the in vivo substrate is unknown. This Cronobacter sakazakii (strain ATCC BAA-894) (Enterobacter sakazakii) protein is Probable lipid kinase YegS-like.